The following is a 242-amino-acid chain: Universal stress protein PHOS32 (242 aa).

Residues 1 to 43 constitute a chloroplast transit peptide; it reads MNPADSDHPQLPNIKIHHPPSPRHSHHHHSSSTPSSAATPTPT. Residues 1-45 are disordered; that stretch reads MNPADSDHPQLPNIKIHHPPSPRHSHHHHSSSTPSSAATPTPTAG. A compositionally biased stretch (basic residues) spans 15–30; the sequence is KIHHPPSPRHSHHHHS. Position 19 (Pro19) interacts with ATP. Position 21 is a phosphoserine; by MAPK3 and MAPK6 (Ser21). The span at 31-44 shows a compositional bias: low complexity; it reads SSTPSSAATPTPTA. ATP-binding positions include Val83, 168-178, and 186-188; these read GSRGFGAEKKR and SVS. The residue at position 219 (Ser219) is a Phosphoserine.

This sequence belongs to the universal stress protein A family. Phosphorylated by MAPK3 and MAPK6 after pathogenic elicitation (e.g. bacterial flg22, Phytophthora infestans zoospores and xylanase).

It is found in the plastid. The protein localises to the chloroplast. The protein is Universal stress protein PHOS32 of Arabidopsis thaliana (Mouse-ear cress).